Reading from the N-terminus, the 475-residue chain is ATP synthase subunit beta, chloroplastic (475 aa).

156–163 (GGAGVGKT) lines the ATP pocket.

This sequence belongs to the ATPase alpha/beta chains family. F-type ATPases have 2 components, CF(1) - the catalytic core - and CF(0) - the membrane proton channel. CF(1) has five subunits: alpha(3), beta(3), gamma(1), delta(1), epsilon(1). CF(0) has four main subunits: a(1), b(1), b'(1) and c(9-12).

The protein localises to the plastid. Its subcellular location is the chloroplast thylakoid membrane. The enzyme catalyses ATP + H2O + 4 H(+)(in) = ADP + phosphate + 5 H(+)(out). Its function is as follows. Produces ATP from ADP in the presence of a proton gradient across the membrane. The catalytic sites are hosted primarily by the beta subunits. The chain is ATP synthase subunit beta, chloroplastic from Phaeodactylum tricornutum (strain CCAP 1055/1).